The following is a 649-amino-acid chain: Sulfate transporter 1.1 (649 aa).

The tract at residues 1–20 (MSGTINPPDGGGSGARNPPV) is disordered. At 1–86 (MSGTINPPDG…AREYTLRKFR (86 aa)) the chain is on the cytoplasmic side. Residues 87–107 (GDLIAGLTIASLCIPQDIGYA) traverse the membrane as a helical segment. The Extracellular portion of the chain corresponds to 108–111 (KLAN). Residues 112 to 132 (VDPKYGLYSSFVPPLIYAGMG) form a helical membrane-spanning segment. The Cytoplasmic portion of the chain corresponds to 133–136 (SSRD). A helical transmembrane segment spans residues 137–157 (IAIGPVAVVSLLVGTLCQAVI). Residues 158-168 (DPKKNPEDYLR) lie on the Extracellular side of the membrane. The next 2 membrane-spanning stretches (helical) occupy residues 169–189 (LVFT…FLRL) and 190–210 (GFLI…GAAI). At 211 to 248 (TIALQQLKGFLGIKTFTKKTDIVSVMHSVFKNAEHGWN) the chain is on the extracellular side. Residues 249-269 (WQTIVIGASFLTFLLVTKFIG) form a helical membrane-spanning segment. Topologically, residues 270–275 (KRNRKL) are cytoplasmic. Residues 276 to 296 (FWVPAIAPLISVIISTFFVFI) form a helical membrane-spanning segment. Topologically, residues 297–334 (FRADKQGVQIVKHIDQGINPISVHKIFFSGKYFTEGIR) are extracellular. The helical transmembrane segment at 335–355 (IGGIAGMVALTEAVAIARTFA) threads the bilayer. Over 356-367 (AMKDYQIDGNKE) the chain is Cytoplasmic. A helical membrane pass occupies residues 368–388 (MIALGTMNVVGSMTSCYIATG). Over 389 to 404 (SFSRSAVNFMAGVETA) the chain is Extracellular. A helical membrane pass occupies residues 405–425 (VSNIVMAIVVALTLEFITPLF). Residues 426 to 431 (KYTPNA) lie on the Cytoplasmic side of the membrane. A helical transmembrane segment spans residues 432–452 (ILAAIIISAVLGLIDIDAAIL). At 453-465 (IWRIDKLDFLACM) the chain is on the extracellular side. A helical membrane pass occupies residues 466-486 (GAFLGVIFISVEIGLLIAVVI). The Cytoplasmic segment spans residues 487–649 (SFAKILLQVT…CSTEVAEQQT (163 aa)). Residues 517 to 640 (QYPDAAQIPG…LTVGDAVAVC (124 aa)) form the STAS domain.

This sequence belongs to the SLC26A/SulP transporter (TC 2.A.53) family. In terms of assembly, interacts with OASA1 through its STAS domain. In terms of tissue distribution, expressed in lateral root cap, root hairs, epidermal and cortical cells of roots.

Its subcellular location is the membrane. In terms of biological role, high-affinity H(+)/sulfate cotransporter that mediates the uptake of the environmental sulfate by plant roots under low-sulfur conditions. Plays a central role in the regulation of sulfate assimilation. In Arabidopsis thaliana (Mouse-ear cress), this protein is Sulfate transporter 1.1 (SULTR1;1).